A 334-amino-acid chain; its full sequence is D-fructose 1,6-bisphosphatase class 2/sedoheptulose 1,7-bisphosphatase (334 aa).

Mn(2+)-binding residues include aspartate 33, glutamate 57, aspartate 85, and glutamate 88. Residues 88–90 (EGT), tyrosine 119, 164–166 (RAR), and 186–188 (DGD) contribute to the substrate site. Glutamate 213 lines the Mn(2+) pocket.

Belongs to the FBPase class 2 family. As to quaternary structure, homotetramer. It depends on Mn(2+) as a cofactor.

It carries out the reaction beta-D-fructose 1,6-bisphosphate + H2O = beta-D-fructose 6-phosphate + phosphate. The enzyme catalyses D-sedoheptulose 1,7-bisphosphate + H2O = D-sedoheptulose 7-phosphate + phosphate. The protein operates within carbohydrate biosynthesis; Calvin cycle. Catalyzes the hydrolysis of fructose 1,6-bisphosphate (Fru 1,6-P2) and sedoheptulose 1,7-bisphosphate (Sed 1,7-P2) to fructose 6-phosphate and sedoheptulose 7-phosphate, respectively. This Prochlorococcus marinus (strain MIT 9313) protein is D-fructose 1,6-bisphosphatase class 2/sedoheptulose 1,7-bisphosphatase.